The following is a 148-amino-acid chain: Respiratory supercomplex factor 1, mitochondrial (148 aa).

The 92-residue stretch at 9 to 100 (LPSSFDAHPE…QERKQRKEFE (92 aa)) folds into the HIG1 domain. The next 2 helical transmembrane spans lie at 36-53 (PLIP…WRAY) and 72-89 (IYGH…GIYY). The stretch at 89-148 (YGQERKQRKEFEKALQEKQDQEKRDAWLRELEVRDKEDKDWRQRHAAMEMAAKEAEKKMG) forms a coiled coil.

It belongs to the RCF1 family. In terms of assembly, associates with the respiratory chain complex III/complex IV supercomplex.

It localises to the mitochondrion membrane. Cytochrome c oxidase subunit which plays a role in assembly of respiratory supercomplexes. The chain is Respiratory supercomplex factor 1, mitochondrial (RCF1) from Ajellomyces dermatitidis (strain ER-3 / ATCC MYA-2586) (Blastomyces dermatitidis).